Consider the following 226-residue polypeptide: NifU-like protein 1, chloroplastic (226 aa).

A chloroplast-targeting transit peptide spans 1-76; the sequence is MQTTTVPMAA…PVTAVQLPLT (76 aa).

Belongs to the NifU family. In terms of assembly, homodimer; disulfide-linked.

Its subcellular location is the plastid. The protein localises to the chloroplast stroma. In terms of biological role, molecular scaffold for [Fe-S] cluster assembly of chloroplastic iron-sulfur proteins. In Oryza sativa subsp. japonica (Rice), this protein is NifU-like protein 1, chloroplastic (NIFU1).